Consider the following 90-residue polypeptide: Small ribosomal subunit protein bS16 (90 aa).

This sequence belongs to the bacterial ribosomal protein bS16 family.

The polypeptide is Small ribosomal subunit protein bS16 (Streptococcus pneumoniae (strain Hungary19A-6)).